The sequence spans 233 residues: Large ribosomal subunit protein uL1 (233 aa).

Belongs to the universal ribosomal protein uL1 family. Part of the 50S ribosomal subunit.

In terms of biological role, binds directly to 23S rRNA. The L1 stalk is quite mobile in the ribosome, and is involved in E site tRNA release. Protein L1 is also a translational repressor protein, it controls the translation of the L11 operon by binding to its mRNA. In Geobacillus sp. (strain WCH70), this protein is Large ribosomal subunit protein uL1.